Reading from the N-terminus, the 152-residue chain is uncharacterized protein (152 aa).

At 1 to 5 the chain is on the cytoplasmic side; it reads MWFPQ. Residues 6–26 form a helical membrane-spanning segment; that stretch reads IIAGMAAGGAASAMTPGKVLF. Residues 27–38 are Extracellular-facing; it reads TNALGLGCSRSR. The helical transmembrane segment at 39 to 59 threads the bilayer; sequence GLFLEMFGTAVLCFTVLMTAV. The Cytoplasmic segment spans residues 60–65; the sequence is EKRETN. Residues 66–86 form a helical membrane-spanning segment; the sequence is FMAALPIGISLFMAHMALTGY. Residues 87-110 lie on the Extracellular side of the membrane; sequence TGTGVNPARSLGAAVAARYFPHYH. The NPA signature appears at 92-94; it reads NPA. A helical membrane pass occupies residues 111-131; it reads WIYWISPLLGAFLAWSVWQLL. Over 132–152 the chain is Cytoplasmic; that stretch reads QILDYTTYVNAEKAAGQKKED.

This sequence belongs to the MIP/aquaporin (TC 1.A.8) family.

The protein resides in the membrane. This is an uncharacterized protein from Saccharomyces cerevisiae (strain YJM789) (Baker's yeast).